Reading from the N-terminus, the 224-residue chain is Non-structural protein V (224 aa).

Polar residues predominate over residues Lys-55–Gln-65. Disordered regions lie at residues Lys-55–Gly-90 and Thr-145–Arg-172. Residues His-170, Cys-189, Cys-193, Cys-205, Cys-207, Cys-210, Cys-214, and Cys-217 each contribute to the Zn(2+) site.

Belongs to the paramyxoviruses V protein family. Interacts with host IFIH1/MDA5 and DHX58/LGP2. Forms with host DDB1, CUL4A, STAT1, STAT2 and STAT3 the mumps virus V-dependent complex (VDC).

The protein localises to the virion. It is found in the host cytoplasm. Functionally, plays an essential role in the inhibition of host immune response. Prevents the establishment of cellular antiviral state by blocking interferon-alpha/beta (IFN-alpha/beta) production and signaling pathway. Interacts with host IFIH1/MDA5 and DHX58/LGP2 to inhibit the transduction pathway involved in the activation of IFN-beta promoter, thus protecting the virus against cell antiviral state. Blocks the type I and II interferon signaling pathways by interacting with host STAT1, STAT2 and STAT3, and mediating their ubiquitination and subsequent proteasomal degradation. The chain is Non-structural protein V from Mumps virus genotype B (strain Miyahara vaccine) (MuV).